A 273-amino-acid polypeptide reads, in one-letter code: Oxidized low-density lipoprotein receptor 1 (273 aa).

Positions 1–22 (MTFDDLKIQTVKDQPDEKSNGK) are disordered. At 1–36 (MTFDDLKIQTVKDQPDEKSNGKKAKGLQFLYSPWWC) the chain is on the cytoplasmic side. S-palmitoyl cysteine attachment occurs at residues Cys36 and Cys46. A helical; Signal-anchor for type II membrane protein membrane pass occupies residues 37 to 57 (LAAATLGVLCLGLVVTIMVLG). The segment at 58-150 (MQLSQVSDLL…SAPCPQDWIW (93 aa)) is neck. Residues 58-273 (MQLSQVSDLL…CQKKANLRAQ (216 aa)) lie on the Extracellular side of the membrane. A coiled-coil region spans residues 64–123 (SDLLTQEQANLTHQKKKLEGQISARQQAEEASQESENELKEMIETLARKLNEKSKEQMEL). Asn73 is a glycosylation site (N-linked (GlcNAc...) asparagine). Asn139 is a glycosylation site (N-linked (GlcNAc...) (complex) asparagine). 3 disulfide bridges follow: Cys144/Cys155, Cys172/Cys264, and Cys243/Cys256. The C-type lectin domain maps to 151–265 (HGENCYLFSS…CILAAFSICQ (115 aa)).

Homodimer; disulfide-linked. May form a hexamer composed of 3 homodimers. Interacts with HSP70. In terms of assembly, (Microbial infection) Binds to the head and beginning of the coiled stalk of N.meningitidis adhesin A (nadA) variant 3; binding can be abrogated by monoclonal antibodies against the specific regions of NadA. Binding occurs in protein microarrays, in solution and when LOX-1 is expressed on the cell surface. The intrachain disulfide-bonds prevent N-glycosylation at some sites. In terms of processing, N-glycosylated. In terms of tissue distribution, expressed at high level in endothelial cells and vascular-rich organs such as placenta, lung, liver and brain, aortic intima, bone marrow, spinal cord and substantia nigra. Also expressed at the surface of dendritic cells. Widely expressed at intermediate and low level.

The protein localises to the cell membrane. It is found in the membrane raft. It localises to the secreted. In terms of biological role, receptor that mediates the recognition, internalization and degradation of oxidatively modified low density lipoprotein (oxLDL) by vascular endothelial cells. OxLDL is a marker of atherosclerosis that induces vascular endothelial cell activation and dysfunction, resulting in pro-inflammatory responses, pro-oxidative conditions and apoptosis. Its association with oxLDL induces the activation of NF-kappa-B through an increased production of intracellular reactive oxygen and a variety of pro-atherogenic cellular responses including a reduction of nitric oxide (NO) release, monocyte adhesion and apoptosis. In addition to binding oxLDL, it acts as a receptor for the HSP70 protein involved in antigen cross-presentation to naive T-cells in dendritic cells, thereby participating in cell-mediated antigen cross-presentation. Also involved in inflammatory process, by acting as a leukocyte-adhesion molecule at the vascular interface in endotoxin-induced inflammation. Also acts as a receptor for advanced glycation end (AGE) products, activated platelets, monocytes, apoptotic cells and both Gram-negative and Gram-positive bacteria. Functionally, (Microbial infection) May serve as a receptor for adhesin A variant 3 (nadA) of N.meningitidis. In Homo sapiens (Human), this protein is Oxidized low-density lipoprotein receptor 1 (OLR1).